Consider the following 152-residue polypeptide: Large ribosomal subunit protein bL17 (152 aa).

The interval alanine 121 to serine 140 is disordered.

This sequence belongs to the bacterial ribosomal protein bL17 family. As to quaternary structure, part of the 50S ribosomal subunit. Contacts protein L32.

In Pelodictyon phaeoclathratiforme (strain DSM 5477 / BU-1), this protein is Large ribosomal subunit protein bL17.